Consider the following 117-residue polypeptide: Large ribosomal subunit protein bL19 (117 aa).

The protein belongs to the bacterial ribosomal protein bL19 family.

Its function is as follows. This protein is located at the 30S-50S ribosomal subunit interface and may play a role in the structure and function of the aminoacyl-tRNA binding site. In Exiguobacterium sibiricum (strain DSM 17290 / CCUG 55495 / CIP 109462 / JCM 13490 / 255-15), this protein is Large ribosomal subunit protein bL19.